The primary structure comprises 195 residues: Imidazoleglycerol-phosphate dehydratase (195 aa).

Belongs to the imidazoleglycerol-phosphate dehydratase family.

The protein localises to the cytoplasm. It catalyses the reaction D-erythro-1-(imidazol-4-yl)glycerol 3-phosphate = 3-(imidazol-4-yl)-2-oxopropyl phosphate + H2O. It functions in the pathway amino-acid biosynthesis; L-histidine biosynthesis; L-histidine from 5-phospho-alpha-D-ribose 1-diphosphate: step 6/9. The chain is Imidazoleglycerol-phosphate dehydratase from Cupriavidus metallidurans (strain ATCC 43123 / DSM 2839 / NBRC 102507 / CH34) (Ralstonia metallidurans).